Here is a 130-residue protein sequence, read N- to C-terminus: Splicing regulatory small protein (130 aa).

Positions Met1–Ala10 are enriched in basic residues. 2 disordered regions span residues Met1 to Gly29 and Gly74 to Arg130. The mediates interaction with SRSF3 stretch occupies residues Gly16–Pro22. A compositionally biased stretch (basic and acidic residues) spans Leu77–Val98. Positions Ser120 to Arg130 are enriched in polar residues.

In terms of assembly, interacts with SRSF3; increases SRSF3 binding to specific exons.

Its subcellular location is the nucleus. Its function is as follows. Interacts with the splicing factor SRSF3 and increases its binding to specific exons within pre-mRNA, thereby regulating exon-inclusion during alternative splicing. Does not directly bind pre-mRNA and could regulate a wider range of splicing factors through a similar mechanism. The chain is Splicing regulatory small protein from Homo sapiens (Human).